Here is a 51-residue protein sequence, read N- to C-terminus: Ovomucoid (51 aa).

The region spanning 1 to 49 is the Kazal-like domain; it reads VDCSEYPQPACTTERRPVCGSNNKTYSNKCNFCNAVVKSNGTLTVSHFG. 3 disulfides stabilise this stretch: Cys-3–Cys-33, Cys-11–Cys-30, and Cys-19–Cys-51. Asn-40 is a glycosylation site (N-linked (GlcNAc...) asparagine).

It is found in the secreted. This is Ovomucoid from Polyplectron napoleonis (Palawan peacock-pheasant).